The primary structure comprises 596 residues: Pescadillo homolog (596 aa).

In terms of domain architecture, BRCT spans 347-440 (PTSTLFSEFV…ELVPANLYLP (94 aa)). A disordered region spans residues 449-552 (SPWGDSVGYD…EEKDLKLIMM (104 aa)). A coiled-coil region spans residues 460-596 (AAELAEEEAE…TKAKLKKLEN (137 aa)). A compositionally biased stretch (acidic residues) spans 463-500 (LAEEEAESEEEEEVSDEAEGDEEATLAAEEDEEDEAEA). A compositionally biased stretch (basic and acidic residues) spans 501–510 (EELRAQKELE). Residues 519–529 (SEAADSAAPSK) are compositionally biased toward low complexity.

Belongs to the pescadillo family. In terms of assembly, component of the NOP7 complex, composed of ERB1, NOP7 and YTM1. The complex is held together by ERB1, which interacts with NOP7 via its N-terminal domain and with YTM1 via a high-affinity interaction between the seven-bladed beta-propeller domains of the 2 proteins. The NOP7 complex associates with the 66S pre-ribosome.

The protein resides in the nucleus. Its subcellular location is the nucleolus. The protein localises to the nucleoplasm. In terms of biological role, component of the NOP7 complex, which is required for maturation of the 25S and 5.8S ribosomal RNAs and formation of the 60S ribosome. The chain is Pescadillo homolog from Eremothecium gossypii (strain ATCC 10895 / CBS 109.51 / FGSC 9923 / NRRL Y-1056) (Yeast).